Reading from the N-terminus, the 276-residue chain is Alpha N-terminal protein methyltransferase 1 (276 aa).

S-adenosyl-L-methionine-binding positions include G96, R101, 118-120 (EPV), 149-150 (LQ), and Q165.

Belongs to the methyltransferase superfamily. NTM1 family.

The enzyme catalyses N-terminal L-alanyl-L-prolyl-L-lysyl-[protein] + 3 S-adenosyl-L-methionine = N-terminal N,N,N-trimethyl-L-alanyl-L-prolyl-L-lysyl-[protein] + 3 S-adenosyl-L-homocysteine + 3 H(+). The catalysed reaction is N-terminal L-seryl-L-prolyl-L-lysyl-[protein] + 3 S-adenosyl-L-methionine = N-terminal N,N,N-trimethyl-L-seryl-L-prolyl-L-lysyl-[protein] + 3 S-adenosyl-L-homocysteine + 3 H(+). It catalyses the reaction N-terminal L-prolyl-L-prolyl-L-lysyl-[protein] + 2 S-adenosyl-L-methionine = N-terminal N,N-dimethyl-L-prolyl-L-prolyl-L-lysyl-[protein] + 2 S-adenosyl-L-homocysteine + 2 H(+). Alpha-N-methyltransferase that methylates the N-terminus of target proteins containing the N-terminal motif [Ala/Pro/Ser]-Pro-Lys when the initiator Met is cleaved. Specifically catalyzes mono-, di- or tri-methylation of exposed alpha-amino group of Ala or Ser residue in the [Ala/Ser]-Pro-Lys motif and mono- or di-methylation of Pro in the Pro-Pro-Lys motif. This chain is Alpha N-terminal protein methyltransferase 1, found in Arabidopsis thaliana (Mouse-ear cress).